The primary structure comprises 640 residues: ATP-dependent rRNA helicase spb4 (640 aa).

Residues 14-42 (WDAVTPALSEWVLEAMSSMGFTRMTPVQA) carry the Q motif motif. The 205-residue stretch at 45-249 (IPLFMAHKDV…RVGLRNPVKV (205 aa)) folds into the Helicase ATP-binding domain. An ATP-binding site is contributed by 58-65 (AVTGSGKT). Residues 197–200 (DEAD) carry the DEAD box motif. The Helicase C-terminal domain maps to 283-437 (ALKRILSSVQ…LITFSDADAA (155 aa)). The stretch at 521-629 (AYKDKQREKR…AAKAAGAKAD (109 aa)) forms a coiled coil. Disordered stretches follow at residues 531–595 (RKEL…EKQK) and 607–640 (RKKNEEERRLRRAAAKAAGAKADGDDEEEFQGFD). Positions 568 to 582 (KKLKRREQKKSKHEK) are enriched in basic residues. A compositionally biased stretch (basic and acidic residues) spans 583–595 (ARWEKMTEEEKQK). Positions 630-640 (GDDEEEFQGFD) are enriched in acidic residues.

This sequence belongs to the DEAD box helicase family. DDX55/SPB4 subfamily. In terms of assembly, component of pre-60S ribosomal complexes.

The protein resides in the nucleus. The protein localises to the nucleolus. It carries out the reaction ATP + H2O = ADP + phosphate + H(+). ATP-binding RNA helicase involved in the biogenesis of 60S ribosomal subunits. Binds 90S pre-ribosomal particles and dissociates from pre-60S ribosomal particles after processing of 27SB pre-rRNA. Required for the normal formation of 18S rRNA through the processing of pre-rRNAs at sites A0, A1 and A2, and the normal formation of 25S and 5.8S rRNAs through the processing of pre-rRNAs at sites C1 and C2. In Neosartorya fischeri (strain ATCC 1020 / DSM 3700 / CBS 544.65 / FGSC A1164 / JCM 1740 / NRRL 181 / WB 181) (Aspergillus fischerianus), this protein is ATP-dependent rRNA helicase spb4.